Reading from the N-terminus, the 447-residue chain is Probable glycine dehydrogenase (decarboxylating) subunit 1 (447 aa).

This sequence belongs to the GcvP family. N-terminal subunit subfamily. The glycine cleavage system is composed of four proteins: P, T, L and H. In this organism, the P 'protein' is a heterodimer of two subunits.

The catalysed reaction is N(6)-[(R)-lipoyl]-L-lysyl-[glycine-cleavage complex H protein] + glycine + H(+) = N(6)-[(R)-S(8)-aminomethyldihydrolipoyl]-L-lysyl-[glycine-cleavage complex H protein] + CO2. Its function is as follows. The glycine cleavage system catalyzes the degradation of glycine. The P protein binds the alpha-amino group of glycine through its pyridoxal phosphate cofactor; CO(2) is released and the remaining methylamine moiety is then transferred to the lipoamide cofactor of the H protein. The sequence is that of Probable glycine dehydrogenase (decarboxylating) subunit 1 from Macrococcus caseolyticus (strain JCSC5402) (Macrococcoides caseolyticum).